The primary structure comprises 427 residues: Enolase (427 aa).

(2R)-2-phosphoglycerate is bound at residue Q163. The Proton donor role is filled by E205. Mg(2+) contacts are provided by D242, E285, and D312. 4 residues coordinate (2R)-2-phosphoglycerate: K337, R366, S367, and K388. The Proton acceptor role is filled by K337.

This sequence belongs to the enolase family. Mg(2+) is required as a cofactor.

The protein resides in the cytoplasm. It localises to the secreted. It is found in the cell surface. It catalyses the reaction (2R)-2-phosphoglycerate = phosphoenolpyruvate + H2O. It functions in the pathway carbohydrate degradation; glycolysis; pyruvate from D-glyceraldehyde 3-phosphate: step 4/5. In terms of biological role, catalyzes the reversible conversion of 2-phosphoglycerate (2-PG) into phosphoenolpyruvate (PEP). It is essential for the degradation of carbohydrates via glycolysis. The protein is Enolase of Rhodopseudomonas palustris (strain TIE-1).